The following is a 1173-amino-acid chain: SMC5-SMC6 complex localization factor protein 2 (1173 aa).

Residues 1 to 109 are disordered; the sequence is MTRRCMPARP…KPKRVPPEKS (109 aa). 2 stretches are compositionally biased toward basic and acidic residues: residues 39–50 and 88–106; these read KRTESPGDRKQS and QFER…RVPP. An APIM motif motif is present at residues 137–149; the sequence is SLASKYLAKGTNI. Disordered stretches follow at residues 161–230, 256–275, 280–373, 394–620, and 635–663; these read MKSL…PEES, QMEQ…SLSL, ERKY…QKEK, KEPS…EEET, and TPAA…VHPG. The segment covering 181–199 has biased composition (basic and acidic residues); the sequence is ENNEKNDRDRGKTNADSKK. Composition is skewed to low complexity over residues 212–221 and 262–275; these read SSRSLSSRSS and NSEN…SLSL. Over residues 280–293 the composition is skewed to basic and acidic residues; that stretch reads ERKYKPRQEQRKQN. Residues 317-330 show a composition bias toward polar residues; the sequence is SDSWEPTSAGSKQN. 2 stretches are compositionally biased toward basic and acidic residues: residues 339–349 and 355–373; these read NSVDSDLKSTR and KARE…QKEK. Residues 409–428 show a composition bias toward polar residues; that stretch reads PSNSGNSGHHSTRNSDQIQV. Ser481 bears the Phosphoserine mark. Basic and acidic residues predominate over residues 499 to 520; that stretch reads SKKDKERSSSKECSGHSTESTK. Residues 571-592 show a composition bias toward low complexity; that stretch reads APSDKAPSEGESSGNSNAGSSA. Over residues 602–619 the composition is skewed to acidic residues; the sequence is DSDEESLGYNLDSDEEEE. Ser603, Ser607, and Ser614 each carry phosphoserine. The segment at 635–1173 is interaction with SIMC1; sequence TPAATGKPPA…QLHDFWVPDS (539 aa). Residues 664–1166 form an NSE6-like domain region; it reads TYTNTLERLV…NCRPTQGQLH (503 aa). The tract at residues 702–1173 is required for interaction with SLF1 and RAD18; the sequence is PIRIGEEDST…QLHDFWVPDS (472 aa).

This sequence belongs to the FAM178 family. In terms of assembly, forms a heterodimer with SIMC1. Interacts with SLF1 (via N-terminus); this interaction links RAD18 to the SMC5-SMC6 complex. Interacts with RAD18; this interaction is increased in a SLF1-dependent manner. Interacts with SMC5 and SMC6. As to expression, widely expressed. Expressed at higher level in skeletal muscle and at slightly lower level in brain, liver and heart, than in lung, kidney, spleen and thymus.

Its subcellular location is the nucleus. It is found in the PML body. In terms of biological role, plays a role in the DNA damage response (DDR) pathway by regulating postreplication repair of UV-damaged DNA and genomic stability maintenance. The SLF1-SLF2 complex acts to link RAD18 with the SMC5-SMC6 complex at replication-coupled interstrand cross-links (ICL) and DNA double-strand breaks (DSBs) sites on chromatin during DNA repair in response to stalled replication forks. Promotes the recruitment of the SMC5-SMC6 complex to DNA lesions. Plays a role in SMC5-SMC6 complex recruitment for viral restriction. Forms a complex with SIMC1 and this complex is required to recruit SMC5-SMC6 complex to PML nuclear bodies and sites of viral replication. The protein is SMC5-SMC6 complex localization factor protein 2 of Homo sapiens (Human).